The sequence spans 195 residues: NADH-quinone oxidoreductase subunit B (195 aa).

4 residues coordinate [4Fe-4S] cluster: C74, C75, C139, and C169.

The protein belongs to the complex I 20 kDa subunit family. In terms of assembly, NDH-1 is composed of 14 different subunits. Subunits NuoB, C, D, E, F, and G constitute the peripheral sector of the complex. It depends on [4Fe-4S] cluster as a cofactor.

Its subcellular location is the cell inner membrane. The enzyme catalyses a quinone + NADH + 5 H(+)(in) = a quinol + NAD(+) + 4 H(+)(out). In terms of biological role, NDH-1 shuttles electrons from NADH, via FMN and iron-sulfur (Fe-S) centers, to quinones in the respiratory chain. The immediate electron acceptor for the enzyme in this species is believed to be ubiquinone. Couples the redox reaction to proton translocation (for every two electrons transferred, four hydrogen ions are translocated across the cytoplasmic membrane), and thus conserves the redox energy in a proton gradient. The chain is NADH-quinone oxidoreductase subunit B from Methylorubrum populi (strain ATCC BAA-705 / NCIMB 13946 / BJ001) (Methylobacterium populi).